Reading from the N-terminus, the 117-residue chain is Immunoglobulin lambda variable 1-47 (117 aa).

The signal sequence occupies residues 1–19 (MAGFPLLLTLLTHCAGSWA). Position 20 is a pyrrolidone carboxylic acid (Q20). The interval 20–44 (QSVLTQPPSASGTPGQRVTISCSGS) is framework-1. The Ig-like domain maps to 20-117 (QSVLTQPPSA…CAAWDDSLSG (98 aa)). A disulfide bond links C41 and C108. The interval 45 to 52 (SSNIGSNY) is complementarity-determining-1. A framework-2 region spans residues 53 to 69 (VYWYQQLPGTAPKLLIY). The complementarity-determining-2 stretch occupies residues 70–72 (SNN). A framework-3 region spans residues 73 to 108 (QRPSGVPDRFSGSKSGTSASLAISGLRSEDEADYYC). The interval 109 to 117 (AAWDDSLSG) is complementarity-determining-3.

As to quaternary structure, immunoglobulins are composed of two identical heavy chains and two identical light chains; disulfide-linked.

The protein localises to the secreted. Its subcellular location is the cell membrane. V region of the variable domain of immunoglobulin light chains that participates in the antigen recognition. Immunoglobulins, also known as antibodies, are membrane-bound or secreted glycoproteins produced by B lymphocytes. In the recognition phase of humoral immunity, the membrane-bound immunoglobulins serve as receptors which, upon binding of a specific antigen, trigger the clonal expansion and differentiation of B lymphocytes into immunoglobulins-secreting plasma cells. Secreted immunoglobulins mediate the effector phase of humoral immunity, which results in the elimination of bound antigens. The antigen binding site is formed by the variable domain of one heavy chain, together with that of its associated light chain. Thus, each immunoglobulin has two antigen binding sites with remarkable affinity for a particular antigen. The variable domains are assembled by a process called V-(D)-J rearrangement and can then be subjected to somatic hypermutations which, after exposure to antigen and selection, allow affinity maturation for a particular antigen. The protein is Immunoglobulin lambda variable 1-47 of Homo sapiens (Human).